We begin with the raw amino-acid sequence, 395 residues long: Succinyl-diaminopimelate desuccinylase (395 aa).

Position 74 (histidine 74) interacts with Zn(2+). Aspartate 76 is a catalytic residue. Aspartate 107 provides a ligand contact to Zn(2+). Residue glutamate 141 is the Proton acceptor of the active site. Zn(2+)-binding residues include glutamate 142, glutamate 170, and histidine 368.

Belongs to the peptidase M20A family. DapE subfamily. In terms of assembly, homodimer. Zn(2+) serves as cofactor. Co(2+) is required as a cofactor.

It catalyses the reaction N-succinyl-(2S,6S)-2,6-diaminopimelate + H2O = (2S,6S)-2,6-diaminopimelate + succinate. It participates in amino-acid biosynthesis; L-lysine biosynthesis via DAP pathway; LL-2,6-diaminopimelate from (S)-tetrahydrodipicolinate (succinylase route): step 3/3. Its function is as follows. Catalyzes the hydrolysis of N-succinyl-L,L-diaminopimelic acid (SDAP), forming succinate and LL-2,6-diaminopimelate (DAP), an intermediate involved in the bacterial biosynthesis of lysine and meso-diaminopimelic acid, an essential component of bacterial cell walls. The protein is Succinyl-diaminopimelate desuccinylase of Brucella melitensis biotype 2 (strain ATCC 23457).